A 91-amino-acid chain; its full sequence is Small ribosomal subunit protein uS19 (91 aa).

Belongs to the universal ribosomal protein uS19 family.

Functionally, protein S19 forms a complex with S13 that binds strongly to the 16S ribosomal RNA. This Aromatoleum aromaticum (strain DSM 19018 / LMG 30748 / EbN1) (Azoarcus sp. (strain EbN1)) protein is Small ribosomal subunit protein uS19.